Consider the following 225-residue polypeptide: ATP-dependent Clp protease proteolytic subunit (225 aa).

Residue Ser101 is the Nucleophile of the active site. His126 is an active-site residue.

The protein belongs to the peptidase S14 family. Component of the chloroplastic Clp protease core complex.

Its subcellular location is the plastid. The protein resides in the chloroplast stroma. The enzyme catalyses Hydrolysis of proteins to small peptides in the presence of ATP and magnesium. alpha-casein is the usual test substrate. In the absence of ATP, only oligopeptides shorter than five residues are hydrolyzed (such as succinyl-Leu-Tyr-|-NHMec, and Leu-Tyr-Leu-|-Tyr-Trp, in which cleavage of the -Tyr-|-Leu- and -Tyr-|-Trp bonds also occurs).. Cleaves peptides in various proteins in a process that requires ATP hydrolysis. Has a chymotrypsin-like activity. Plays a major role in the degradation of misfolded proteins. The protein is ATP-dependent Clp protease proteolytic subunit of Chlorokybus atmophyticus (Soil alga).